The sequence spans 190 residues: MRGLRPALSTFIFLLLITGGVYPLLTTALGQWWFPWQANGSLIREGDTVRGSALIGQNFTDNGYFHGRPSATAEMPYNPQASGGSNLAVSNPELDKLIAARVAALRAANPNASTSVPVELVTASASGLDNNITPQAAAWQIPRVAKARNLSVEQLTQLIAKYSQQPLVKYIGQPVVNIVELNLALDKLDE.

The chain crosses the membrane as a helical span at residues 10–30 (TFIFLLLITGGVYPLLTTALG).

It belongs to the KdpC family. The system is composed of three essential subunits: KdpA, KdpB and KdpC.

It localises to the cell inner membrane. Part of the high-affinity ATP-driven potassium transport (or Kdp) system, which catalyzes the hydrolysis of ATP coupled with the electrogenic transport of potassium into the cytoplasm. This subunit acts as a catalytic chaperone that increases the ATP-binding affinity of the ATP-hydrolyzing subunit KdpB by the formation of a transient KdpB/KdpC/ATP ternary complex. This Escherichia coli O157:H7 protein is Potassium-transporting ATPase KdpC subunit.